Consider the following 21-residue polypeptide: Protein YmjD (21 aa).

The polypeptide is Protein YmjD (ymjD) (Escherichia coli (strain K12)).